A 271-amino-acid polypeptide reads, in one-letter code: 4-hydroxy-tetrahydrodipicolinate reductase (271 aa).

NAD(+) is bound by residues 10 to 15 (GAGGRM), Glu36, 100 to 102 (GTT), and 124 to 127 (SGNM). The active-site Proton donor/acceptor is the His157. A (S)-2,3,4,5-tetrahydrodipicolinate-binding site is contributed by His158. Lys161 acts as the Proton donor in catalysis. 167 to 168 (GT) contributes to the (S)-2,3,4,5-tetrahydrodipicolinate binding site.

It belongs to the DapB family.

Its subcellular location is the cytoplasm. The catalysed reaction is (S)-2,3,4,5-tetrahydrodipicolinate + NAD(+) + H2O = (2S,4S)-4-hydroxy-2,3,4,5-tetrahydrodipicolinate + NADH + H(+). The enzyme catalyses (S)-2,3,4,5-tetrahydrodipicolinate + NADP(+) + H2O = (2S,4S)-4-hydroxy-2,3,4,5-tetrahydrodipicolinate + NADPH + H(+). It functions in the pathway amino-acid biosynthesis; L-lysine biosynthesis via DAP pathway; (S)-tetrahydrodipicolinate from L-aspartate: step 4/4. Functionally, catalyzes the conversion of 4-hydroxy-tetrahydrodipicolinate (HTPA) to tetrahydrodipicolinate. The protein is 4-hydroxy-tetrahydrodipicolinate reductase of Rhodopseudomonas palustris (strain BisB18).